A 620-amino-acid polypeptide reads, in one-letter code: Chaperone protein HscA homolog (620 aa).

This sequence belongs to the heat shock protein 70 family.

In terms of biological role, chaperone involved in the maturation of iron-sulfur cluster-containing proteins. Has a low intrinsic ATPase activity which is markedly stimulated by HscB. In Herminiimonas arsenicoxydans, this protein is Chaperone protein HscA homolog.